The primary structure comprises 291 residues: Ribosomal RNA small subunit methyltransferase A (291 aa).

Asn-33, Val-35, Gly-60, Glu-81, Asp-111, and Asn-129 together coordinate S-adenosyl-L-methionine.

It belongs to the class I-like SAM-binding methyltransferase superfamily. rRNA adenine N(6)-methyltransferase family. RsmA subfamily.

Its subcellular location is the cytoplasm. The catalysed reaction is adenosine(1518)/adenosine(1519) in 16S rRNA + 4 S-adenosyl-L-methionine = N(6)-dimethyladenosine(1518)/N(6)-dimethyladenosine(1519) in 16S rRNA + 4 S-adenosyl-L-homocysteine + 4 H(+). Specifically dimethylates two adjacent adenosines (A1518 and A1519) in the loop of a conserved hairpin near the 3'-end of 16S rRNA in the 30S particle. May play a critical role in biogenesis of 30S subunits. This is Ribosomal RNA small subunit methyltransferase A from Streptomyces griseus subsp. griseus (strain JCM 4626 / CBS 651.72 / NBRC 13350 / KCC S-0626 / ISP 5235).